The following is a 61-amino-acid chain: Cytotoxin homolog 3 (61 aa).

4 cysteine pairs are disulfide-bonded: Cys3–Cys22, Cys15–Cys39, Cys43–Cys54, and Cys55–Cys60.

It belongs to the three-finger toxin family. Short-chain subfamily. Orphan group XV sub-subfamily. As to expression, expressed by the venom gland.

Its subcellular location is the secreted. The protein resides in the target cell membrane. Functionally, has low cytotoxic activity. This is Cytotoxin homolog 3 from Naja melanoleuca (Forest cobra).